We begin with the raw amino-acid sequence, 133 residues long: Ribosome-binding factor A (133 aa).

It belongs to the RbfA family. Monomer. Binds 30S ribosomal subunits, but not 50S ribosomal subunits or 70S ribosomes.

Its subcellular location is the cytoplasm. Its function is as follows. One of several proteins that assist in the late maturation steps of the functional core of the 30S ribosomal subunit. Associates with free 30S ribosomal subunits (but not with 30S subunits that are part of 70S ribosomes or polysomes). Required for efficient processing of 16S rRNA. May interact with the 5'-terminal helix region of 16S rRNA. The sequence is that of Ribosome-binding factor A from Bordetella bronchiseptica (strain ATCC BAA-588 / NCTC 13252 / RB50) (Alcaligenes bronchisepticus).